Reading from the N-terminus, the 103-residue chain is Integration host factor subunit alpha (103 aa).

Belongs to the bacterial histone-like protein family. As to quaternary structure, heterodimer of an alpha and a beta chain.

Its function is as follows. This protein is one of the two subunits of integration host factor, a specific DNA-binding protein that functions in genetic recombination as well as in transcriptional and translational control. This is Integration host factor subunit alpha from Aromatoleum aromaticum (strain DSM 19018 / LMG 30748 / EbN1) (Azoarcus sp. (strain EbN1)).